We begin with the raw amino-acid sequence, 103 residues long: GP16 protein (103 aa).

This chain is GP16 protein (GP16), found in Orgyia pseudotsugata multicapsid polyhedrosis virus (OpMNPV).